A 342-amino-acid chain; its full sequence is Tetraacyldisaccharide 4'-kinase (342 aa).

68–75 lines the ATP pocket; it reads TVGGTGKT.

Belongs to the LpxK family.

The enzyme catalyses a lipid A disaccharide + ATP = a lipid IVA + ADP + H(+). The protein operates within glycolipid biosynthesis; lipid IV(A) biosynthesis; lipid IV(A) from (3R)-3-hydroxytetradecanoyl-[acyl-carrier-protein] and UDP-N-acetyl-alpha-D-glucosamine: step 6/6. Functionally, transfers the gamma-phosphate of ATP to the 4'-position of a tetraacyldisaccharide 1-phosphate intermediate (termed DS-1-P) to form tetraacyldisaccharide 1,4'-bis-phosphate (lipid IVA). The sequence is that of Tetraacyldisaccharide 4'-kinase from Burkholderia vietnamiensis (strain G4 / LMG 22486) (Burkholderia cepacia (strain R1808)).